Reading from the N-terminus, the 591-residue chain is Aspartate--tRNA(Asp/Asn) ligase (591 aa).

Residue Glu-174 participates in L-aspartate binding. Residues 198–201 (QLFK) are aspartate. Arg-220 is a binding site for L-aspartate. ATP-binding positions include 220–222 (RDE) and Gln-229. Position 450 (His-450) interacts with L-aspartate. Glu-483 contacts ATP. Position 490 (Arg-490) interacts with L-aspartate. 535–538 (GLDR) is a binding site for ATP.

It belongs to the class-II aminoacyl-tRNA synthetase family. Type 1 subfamily. As to quaternary structure, homodimer.

The protein localises to the cytoplasm. It catalyses the reaction tRNA(Asx) + L-aspartate + ATP = L-aspartyl-tRNA(Asx) + AMP + diphosphate. Aspartyl-tRNA synthetase with relaxed tRNA specificity since it is able to aspartylate not only its cognate tRNA(Asp) but also tRNA(Asn). Reaction proceeds in two steps: L-aspartate is first activated by ATP to form Asp-AMP and then transferred to the acceptor end of tRNA(Asp/Asn). The chain is Aspartate--tRNA(Asp/Asn) ligase from Pseudomonas putida (strain W619).